A 342-amino-acid polypeptide reads, in one-letter code: N-acetyl-gamma-glutamyl-phosphate reductase (342 aa).

The active site involves cysteine 149.

It belongs to the NAGSA dehydrogenase family. Type 1 subfamily.

It localises to the cytoplasm. The enzyme catalyses N-acetyl-L-glutamate 5-semialdehyde + phosphate + NADP(+) = N-acetyl-L-glutamyl 5-phosphate + NADPH + H(+). The protein operates within amino-acid biosynthesis; L-arginine biosynthesis; N(2)-acetyl-L-ornithine from L-glutamate: step 3/4. Catalyzes the NADPH-dependent reduction of N-acetyl-5-glutamyl phosphate to yield N-acetyl-L-glutamate 5-semialdehyde. The protein is N-acetyl-gamma-glutamyl-phosphate reductase of Roseobacter denitrificans (strain ATCC 33942 / OCh 114) (Erythrobacter sp. (strain OCh 114)).